The sequence spans 102 residues: Putative nuclear receptor corepressor 1-like protein NCOR1P1 (102 aa).

Polar residues predominate over residues Met-1 to Ser-18. Positions Met-1–Ser-68 are disordered. Positions Ser-68 to Val-100 form a coiled coil.

It belongs to the N-CoR nuclear receptor corepressors family.

The polypeptide is Putative nuclear receptor corepressor 1-like protein NCOR1P1 (NCOR1P1) (Homo sapiens (Human)).